Reading from the N-terminus, the 298-residue chain is 4-hydroxy-tetrahydrodipicolinate synthase (298 aa).

Thr-48 is a pyruvate binding site. Tyr-137 serves as the catalytic Proton donor/acceptor. Lys-166 functions as the Schiff-base intermediate with substrate in the catalytic mechanism. Ile-207 contacts pyruvate.

It belongs to the DapA family. As to quaternary structure, homotetramer; dimer of dimers.

It is found in the cytoplasm. The catalysed reaction is L-aspartate 4-semialdehyde + pyruvate = (2S,4S)-4-hydroxy-2,3,4,5-tetrahydrodipicolinate + H2O + H(+). Its pathway is amino-acid biosynthesis; L-lysine biosynthesis via DAP pathway; (S)-tetrahydrodipicolinate from L-aspartate: step 3/4. Its function is as follows. Catalyzes the condensation of (S)-aspartate-beta-semialdehyde [(S)-ASA] and pyruvate to 4-hydroxy-tetrahydrodipicolinate (HTPA). This chain is 4-hydroxy-tetrahydrodipicolinate synthase, found in Campylobacter jejuni subsp. jejuni serotype O:6 (strain 81116 / NCTC 11828).